Reading from the N-terminus, the 59-residue chain is Early growth response protein 1 (59 aa).

3 C2H2-type zinc fingers span residues 1–18, 24–46, and 52–59; these read CDRRFSRSDELTRHIRIH, FQCRICMRNFSRSDHLTTHIRTH, and FACDICGR.

This sequence belongs to the EGR C2H2-type zinc-finger protein family.

Its subcellular location is the nucleus. It is found in the cytoplasm. In terms of biological role, transcriptional regulator. Recognizes and binds to the DNA sequence 5'-GCG(T/G)GGGCG-3'(EGR-site) in the promoter region of target genes. Binds double-stranded target DNA, irrespective of the cytosine methylation status. Regulates the transcription of numerous target genes, and thereby plays an important role in regulating the response to growth factors, DNA damage, and ischemia. Plays a role in the regulation of cell survival, proliferation and cell death. Mediates responses to ischemia and hypoxia; regulates the expression of proteins that are involved in inflammatory processes. Plays a role in regulating the expression of circadian clock genes. The sequence is that of Early growth response protein 1 (EGR1) from Serinus canaria (Island canary).